The following is a 167-amino-acid chain: NADH-quinone oxidoreductase subunit B (167 aa).

[4Fe-4S] cluster is bound by residues Cys-40, Cys-41, Cys-105, and Cys-135.

This sequence belongs to the complex I 20 kDa subunit family. NDH-1 is composed of 14 different subunits. Subunits NuoB, C, D, E, F, and G constitute the peripheral sector of the complex. [4Fe-4S] cluster is required as a cofactor.

It localises to the cell inner membrane. It catalyses the reaction a quinone + NADH + 5 H(+)(in) = a quinol + NAD(+) + 4 H(+)(out). NDH-1 shuttles electrons from NADH, via FMN and iron-sulfur (Fe-S) centers, to quinones in the respiratory chain. The immediate electron acceptor for the enzyme in this species is believed to be ubiquinone. Couples the redox reaction to proton translocation (for every two electrons transferred, four hydrogen ions are translocated across the cytoplasmic membrane), and thus conserves the redox energy in a proton gradient. This chain is NADH-quinone oxidoreductase subunit B, found in Magnetococcus marinus (strain ATCC BAA-1437 / JCM 17883 / MC-1).